The following is a 263-amino-acid chain: Versicolorin reductase 1 (263 aa).

I22, D68, N95, and R128 together coordinate NADP(+). Active-site proton donor residues include S144 and S145. NADP(+) contacts are provided by Y159, K163, I192, and T194. Residue Y159 is the Proton acceptor of the active site. K163 functions as the Lowers pKa of active site Tyr in the catalytic mechanism.

This sequence belongs to the short-chain dehydrogenases/reductases (SDR) family.

It localises to the cytoplasm. The protein resides in the cytosol. The protein operates within mycotoxin biosynthesis. In terms of biological role, versicolorin reductase; part of the fragmented gene cluster that mediates the biosynthesis of dothistromin (DOTH), a polyketide toxin very similar in structure to the aflatoxin precursor, versicolorin B. The first step of the pathway is the conversion of acetate to norsolorinic acid (NOR) and requires the fatty acid synthase subunits hexA and hexB, as well as the polyketide synthase pksA. PksA combines a hexanoyl starter unit and 7 malonyl-CoA extender units to synthesize the precursor NOR. The hexanoyl starter unit is provided to the acyl-carrier protein (ACP) domain by the fungal fatty acid synthase hexA/hexB. The second step is the conversion of NOR to averantin (AVN) and requires the norsolorinic acid ketoreductase nor1, which catalyzes the dehydration of norsolorinic acid to form (1'S)-averantin. The cytochrome P450 monooxygenase avnA then catalyzes the hydroxylation of AVN to 5'hydroxyaverantin (HAVN). The next step is performed by adhA that transforms HAVN to averufin (AVF). Averufin might then be converted to hydroxyversicolorone by cypX and avfA. Hydroxyversicolorone is further converted versiconal hemiacetal acetate (VHA) by moxY. VHA is then the substrate for the versiconal hemiacetal acetate esterase est1 to yield versiconal (VAL). Versicolorin B synthase vbsA then converts VAL to versicolorin B (VERB) by closing the bisfuran ring. Then, the activity of the versicolorin B desaturase verB leads to versicolorin A (VERA). DotB, a predicted chloroperoxidase, may perform epoxidation of the A-ring of VERA. Alternatively, a cytochrome P450, such as cypX or avnA could catalyze this step. It is also possible that another, uncharacterized, cytochrome P450 enzyme is responsible for this step. Opening of the epoxide could potentially be achieved by the epoxide hydrolase epoA. However, epoA seems not to be required for DOTH biosynthesis, but other epoxide hydrolases may have the ability to complement this hydrolysis. Alternatively, opening of the epoxide ring could be achieved non-enzymatically. The next step is the deoxygenation of ring A to yield the 5,8-dihydroxyanthraquinone which is most likely catalyzed by the NADPH dehydrogenase encoded by ver1. The last stages of DOTH biosynthesis are proposed to involve hydroxylation of the bisfuran. OrdB and norB might have oxidative roles here. An alternative possibility is that cytochrome P450 monoogenases such as avnA and cypX might perform these steps in addition to previously proposed steps. The polypeptide is Versicolorin reductase 1 (Dothistroma septosporum (Red band needle blight fungus)).